The following is a 319-amino-acid chain: Curved DNA-binding protein (319 aa).

In terms of domain architecture, J spans 5–69 (DYYKILGVEP…QKRAEFDEIR (65 aa)).

Its subcellular location is the cytoplasm. The protein resides in the nucleoid. Its function is as follows. DNA-binding protein that preferentially recognizes a curved DNA sequence. It is probably a functional analog of DnaJ; displays overlapping activities with DnaJ, but functions under different conditions, probably acting as a molecular chaperone in an adaptive response to environmental stresses other than heat shock. Lacks autonomous chaperone activity; binds native substrates and targets them for recognition by DnaK. Its activity is inhibited by the binding of CbpM. This Pseudomonas putida (strain ATCC 47054 / DSM 6125 / CFBP 8728 / NCIMB 11950 / KT2440) protein is Curved DNA-binding protein.